A 212-amino-acid polypeptide reads, in one-letter code: uncharacterized protein (212 aa).

The signal sequence occupies residues 1–20 (MRRVLLCFLTLILLLPAASA).

This is an uncharacterized protein from Archaeoglobus fulgidus (strain ATCC 49558 / DSM 4304 / JCM 9628 / NBRC 100126 / VC-16).